The following is a 213-amino-acid chain: Holliday junction branch migration complex subunit RuvA (213 aa).

Positions 1 to 63 (MISFLRGTVA…EDSMTLFGFA (63 aa)) are domain I. Residues 64–140 (DDDEREVFEV…LVPHGTAPAA (77 aa)) are domain II. Residues 140–144 (AATTA) form a flexible linker region. Positions 145–213 (AEASWKPQVV…RAGNRVGSRG (69 aa)) are domain III.

The protein belongs to the RuvA family. Homotetramer. Forms an RuvA(8)-RuvB(12)-Holliday junction (HJ) complex. HJ DNA is sandwiched between 2 RuvA tetramers; dsDNA enters through RuvA and exits via RuvB. An RuvB hexamer assembles on each DNA strand where it exits the tetramer. Each RuvB hexamer is contacted by two RuvA subunits (via domain III) on 2 adjacent RuvB subunits; this complex drives branch migration. In the full resolvosome a probable DNA-RuvA(4)-RuvB(12)-RuvC(2) complex forms which resolves the HJ.

It is found in the cytoplasm. In terms of biological role, the RuvA-RuvB-RuvC complex processes Holliday junction (HJ) DNA during genetic recombination and DNA repair, while the RuvA-RuvB complex plays an important role in the rescue of blocked DNA replication forks via replication fork reversal (RFR). RuvA specifically binds to HJ cruciform DNA, conferring on it an open structure. The RuvB hexamer acts as an ATP-dependent pump, pulling dsDNA into and through the RuvAB complex. HJ branch migration allows RuvC to scan DNA until it finds its consensus sequence, where it cleaves and resolves the cruciform DNA. The chain is Holliday junction branch migration complex subunit RuvA from Pseudarthrobacter chlorophenolicus (strain ATCC 700700 / DSM 12829 / CIP 107037 / JCM 12360 / KCTC 9906 / NCIMB 13794 / A6) (Arthrobacter chlorophenolicus).